Reading from the N-terminus, the 325-residue chain is Eukaryotic translation initiation factor 3 subunit I (325 aa).

5 WD repeats span residues 8–47 (GHER…RLGT), 50–89 (GHTG…QLAL), 144–183 (CSDS…QLSN), 186–225 (EHTK…HLKT), and 283–324 (GHFG…FEFE).

This sequence belongs to the eIF-3 subunit I family. As to quaternary structure, component of the eukaryotic translation initiation factor 3 (eIF-3) complex, which is composed of 13 subunits: EIF3A, EIF3B, EIF3C, EIF3D, EIF3E, EIF3F, EIF3G, EIF3H, EIF3I, EIF3J, EIF3K, EIF3L and EIF3M.

The protein localises to the cytoplasm. Component of the eukaryotic translation initiation factor 3 (eIF-3) complex, which is involved in protein synthesis of a specialized repertoire of mRNAs and, together with other initiation factors, stimulates binding of mRNA and methionyl-tRNAi to the 40S ribosome. The eIF-3 complex specifically targets and initiates translation of a subset of mRNAs involved in cell proliferation. The sequence is that of Eukaryotic translation initiation factor 3 subunit I from Taeniopygia guttata (Zebra finch).